A 342-amino-acid polypeptide reads, in one-letter code: Endo-1,4-beta-xylanase A (342 aa).

The region spanning 11–342 is the GH10 domain; the sequence is EMLNLSLAKT…KEALYRILRF (332 aa). Residue Glu144 is the Proton donor of the active site. Residue Glu252 is the Nucleophile of the active site.

It belongs to the glycosyl hydrolase 10 (cellulase F) family. Cytoplasmic xylanase subfamily.

Its subcellular location is the cytoplasm. It catalyses the reaction Endohydrolysis of (1-&gt;4)-beta-D-xylosidic linkages in xylans.. It participates in glycan degradation; xylan degradation. The protein is Endo-1,4-beta-xylanase A (xynA) of Caldicellulosiruptor saccharolyticus (Caldocellum saccharolyticum).